The chain runs to 279 residues: Thymidylate synthase (279 aa).

133-134 (RR) is a dUMP binding site. Cys154 (nucleophile) is an active-site residue. DUMP is bound by residues 178–181 (RSND), Asn189, and 219–221 (HIY). (6R)-5,10-methylene-5,6,7,8-tetrahydrofolate is bound at residue Asp181. Residue Ala278 participates in (6R)-5,10-methylene-5,6,7,8-tetrahydrofolate binding.

It belongs to the thymidylate synthase family. Bacterial-type ThyA subfamily. In terms of assembly, homodimer.

Its subcellular location is the cytoplasm. It catalyses the reaction dUMP + (6R)-5,10-methylene-5,6,7,8-tetrahydrofolate = 7,8-dihydrofolate + dTMP. It functions in the pathway pyrimidine metabolism; dTTP biosynthesis. Functionally, catalyzes the reductive methylation of 2'-deoxyuridine-5'-monophosphate (dUMP) to 2'-deoxythymidine-5'-monophosphate (dTMP) while utilizing 5,10-methylenetetrahydrofolate (mTHF) as the methyl donor and reductant in the reaction, yielding dihydrofolate (DHF) as a by-product. This enzymatic reaction provides an intracellular de novo source of dTMP, an essential precursor for DNA biosynthesis. The protein is Thymidylate synthase of Streptococcus pyogenes serotype M12 (strain MGAS2096).